We begin with the raw amino-acid sequence, 279 residues long: Elongation factor Ts (279 aa).

The involved in Mg(2+) ion dislocation from EF-Tu stretch occupies residues 80-83 (TDFV).

This sequence belongs to the EF-Ts family.

Its subcellular location is the cytoplasm. Functionally, associates with the EF-Tu.GDP complex and induces the exchange of GDP to GTP. It remains bound to the aminoacyl-tRNA.EF-Tu.GTP complex up to the GTP hydrolysis stage on the ribosome. This is Elongation factor Ts from Borreliella afzelii (strain PKo) (Borrelia afzelii).